The following is a 561-amino-acid chain: Asparagine synthetase [glutamine-hydrolyzing] (561 aa).

The active-site For GATase activity is cysteine 2. Residues 2 to 191 (CGIWALFGSD…PGHYEVLDLK (190 aa)) enclose the Glutamine amidotransferase type-2 domain. Residues 49 to 53 (RLAVV), 75 to 77 (NGE), and aspartate 97 contribute to the L-glutamine site. The region spanning 213 to 536 (HAACDTVGNL…PGRSSWLPHY (324 aa)) is the Asparagine synthetase domain. Residues leucine 256, isoleucine 288, and 363 to 364 (SG) contribute to the ATP site.

It catalyses the reaction L-aspartate + L-glutamine + ATP + H2O = L-asparagine + L-glutamate + AMP + diphosphate + H(+). It functions in the pathway amino-acid biosynthesis; L-asparagine biosynthesis; L-asparagine from L-aspartate (L-Gln route): step 1/1. The polypeptide is Asparagine synthetase [glutamine-hydrolyzing] (ASNS) (Gallus gallus (Chicken)).